Here is a 73-residue protein sequence, read N- to C-terminus: Large ribosomal subunit protein bL31 (73 aa).

Belongs to the bacterial ribosomal protein bL31 family. Type A subfamily. Part of the 50S ribosomal subunit.

Its function is as follows. Binds the 23S rRNA. This Cereibacter sphaeroides (strain ATCC 17025 / ATH 2.4.3) (Rhodobacter sphaeroides) protein is Large ribosomal subunit protein bL31.